Reading from the N-terminus, the 134-residue chain is Small ribosomal subunit protein uS8c (134 aa).

This sequence belongs to the universal ribosomal protein uS8 family. Part of the 30S ribosomal subunit.

It is found in the plastid. Its subcellular location is the chloroplast. In terms of biological role, one of the primary rRNA binding proteins, it binds directly to 16S rRNA central domain where it helps coordinate assembly of the platform of the 30S subunit. The chain is Small ribosomal subunit protein uS8c (rps8) from Pelargonium hortorum (Common geranium).